A 276-amino-acid polypeptide reads, in one-letter code: Foldase protein PrsA (276 aa).

A signal peptide spans 1–18 (MRKWMIVAAVAAVFGLSA). Cys-19 carries N-palmitoyl cysteine lipidation. The S-diacylglycerol cysteine moiety is linked to residue Cys-19. The PpiC domain occupies 133-223 (KPKIRASHIL…YGYHIIKVTD (91 aa)).

It belongs to the PrsA family.

The protein localises to the cell membrane. It catalyses the reaction [protein]-peptidylproline (omega=180) = [protein]-peptidylproline (omega=0). Functionally, plays a major role in protein secretion by helping the post-translocational extracellular folding of several secreted proteins. This Geobacillus sp. (strain WCH70) protein is Foldase protein PrsA.